Consider the following 241-residue polypeptide: Tetraspanin-1 (241 aa).

Topologically, residues methionine 1 to methionine 11 are cytoplasmic. Residues isoleucine 12 to valine 32 form a helical membrane-spanning segment. Topologically, residues serine 33–glutamine 52 are extracellular. A helical transmembrane segment spans residues phenylalanine 53–leucine 73. Topologically, residues glycine 74–threonine 88 are cytoplasmic. A helical transmembrane segment spans residues phenylalanine 89–valine 109. Over tyrosine 110–asparagine 211 the chain is Extracellular. 4 N-linked (GlcNAc...) asparagine glycosylation sites follow: asparagine 141, asparagine 154, asparagine 178, and asparagine 184. Residues alanine 212 to valine 232 traverse the membrane as a helical segment. Residues serine 233 to glutamine 241 lie on the Cytoplasmic side of the membrane.

This sequence belongs to the tetraspanin (TM4SF) family. Interacts with SLC19A2. Interacts with NTRK1/TRKA.

It localises to the cell membrane. It is found in the lysosome membrane. Functionally, structural component of specialized membrane microdomains known as tetraspanin-enriched microdomains (TERMs), which act as platforms for receptor clustering and signaling. Participates thereby in diverse biological functions such as cell signal transduction, adhesion, migration and protein trafficking. Regulates neuronal differentiation in response to NGF by facilitating NGF-mediated activation of NTRK1/TRKA receptor tyrosine kinase and subsequent downstream signaling pathways. Plays a role in the inhibition of TNFalpha-induced apoptosis. Mechanistically, inhibits the NF-kappa-B signaling pathway by blocking phosphorylation of CHUK. Also promotes the stability of the thiamine transporter 1/SLC19A2 in intestinal epithelial cells leading to an increase of thiamine uptake process. This is Tetraspanin-1 (TSPAN1) from Homo sapiens (Human).